Consider the following 579-residue polypeptide: DBIRD complex subunit ZNF326 (579 aa).

Residues 1 to 124 (MDFEDDYTHS…YRNSLDSFGG (124 aa)) form a mediates transcriptional activation region. A phosphoserine mark is found at Ser-48, Ser-56, Ser-63, Ser-69, Ser-81, Ser-82, Ser-91, Ser-106, Ser-114, Ser-118, Ser-121, and Ser-137. A Glycyl lysine isopeptide (Lys-Gly) (interchain with G-Cter in SUMO2) cross-link involves residue Lys-140. Residues 154–194 (YSSYSSFSSPHMKPAPVGSRGRGTPAYPESTFGSRNYDAFG) form a disordered region. Arg-173 carries the post-translational modification Omega-N-methylarginine. The residue at position 212 (Ser-212) is a Phosphoserine. Arg-235 carries the omega-N-methylarginine modification. A Bipartite nuclear localization signal motif is present at residues 238–260 (KRKMIQPFNKPGGTFIKKPKLAK). A Glycyl lysine isopeptide (Lys-Gly) (interchain with G-Cter in SUMO2) cross-link involves residue Lys-240. The residue at position 247 (Lys-247) is an N6-acetyllysine; alternate. A Glycyl lysine isopeptide (Lys-Gly) (interchain with G-Cter in SUMO2); alternate cross-link involves residue Lys-247. The disordered stretch occupies residues 248-302 (PGGTFIKKPKLAKPVEKMSLSKSPTKTDPKNEEEEKRRIEARREKQRRRREKNSE). Thr-251 bears the Phosphothreonine mark. Glycyl lysine isopeptide (Lys-Gly) (interchain with G-Cter in SUMO2) cross-links involve residues Lys-254 and Lys-264. Ser-270 carries the phosphoserine modification. Positions 272–290 (TKTDPKNEEEEKRRIEARR) are enriched in basic and acidic residues. A C2H2 AKAP95-type 1 zinc finger spans residues 314–336 (CSFCKFRTFEEKDIELHLESASH). Lys-401 is covalently cross-linked (Glycyl lysine isopeptide (Lys-Gly) (interchain with G-Cter in SUMO2)). The segment at 407 to 430 (CSACSVYIPALHSSVQQHLKSPDH) adopts a C2H2 AKAP95-type 2 zinc-finger fold. Glycyl lysine isopeptide (Lys-Gly) (interchain with G-Cter in SUMO2) cross-links involve residues Lys-459 and Lys-467. The disordered stretch occupies residues 470 to 579 (NPFEIQDHSQ…GFSVDQAEEN (110 aa)). Acidic residues-rich tracts occupy residues 483–520 (IEGD…EEVG), 529–541 (GDTE…EGEG), and 549–565 (GEGE…EEAK).

It belongs to the AKAP95 family. Component of the DBIRD complex. Interacts with CCAR2; the interaction is direct.

The protein localises to the nucleus matrix. Core component of the DBIRD complex, a multiprotein complex that acts at the interface between core mRNP particles and RNA polymerase II (RNAPII) and integrates transcript elongation with the regulation of alternative splicing: the DBIRD complex affects local transcript elongation rates and alternative splicing of a large set of exons embedded in (A + T)-rich DNA regions. May play a role in neuronal differentiation and is able to bind DNA and activate expression in vitro. The protein is DBIRD complex subunit ZNF326 (ZNF326) of Bos taurus (Bovine).